The following is a 438-amino-acid chain: Cytochrome P450 monooxygenase claJ (438 aa).

Cysteine 378 contributes to the heme binding site.

Belongs to the cytochrome P450 family. Heme serves as cofactor.

The protein operates within secondary metabolite biosynthesis. In terms of biological role, cytochrome P450 monooxygenase; part of the cla gene cluster that produces clavatol and ortho-quinone methide. The clavatol biosynthesis cluster cla and the terrestric acid cluster tra are both involved in the production of peniphenones and penilactones. The non-reducing PKS claF is responsible for the formation of clavatol from successive condensations of 3 malonyl-CoA units, presumably with a simple acetyl-CoA starter unit, and 2 methylation steps. The esterase claE probably collaborates with claF by catalyzing the hydrolysis of ACP-bound acyl intermediates to free the ACP from stalled intermediates. The clavatol oxidase claD then converts clavatol to hydroxyclavatol. Spontaneous dehydration of hydroxyclavatol leads to the accumulation of the highly active ortho-quinone methide. On the other hand, the PKS-NRPS hybrid traA is involved in the formation of crustosic acid, with the help of traB and traD. The polyketide synthase module (PKS) of traA is responsible for the synthesis of the polyketide backbone via the condensation of an acetyl-CoA starter unit with 3 malonyl-CoA units. The downstream nonribosomal peptide synthetase (NRPS) module then amidates the carboxyl end of the polyketide with L-malic acid. Because traA lacks a designated enoylreductase (ER) domain, the required activity is provided the enoyl reductase traG. Crustosic acid undergoes decarboxylation and isomerization to the terrestric acid, catalyzed by the 2-oxoglutarate-dependent dioxygenase traH. Both acids are further converted to the 2 gamma-butyrolactones (R)-5-methyltetronic acid and (S)-5-carboxylmethyltetronic acid, with involvement of the cytochrome P450 monooxygenase claJ. Spontaneous addition of the methide to these gamma-butyrolactones leads to peniphenone D and penilactone D, which undergo again stereospecific attacking by methide to give penilactones A and B. The sequence is that of Cytochrome P450 monooxygenase claJ from Penicillium crustosum (Blue mold fungus).